Reading from the N-terminus, the 289-residue chain is Oxaloacetate decarboxylase (289 aa).

Ser-50 is a binding site for substrate. Asp-88 contacts Mg(2+). The substrate site is built by Arg-159 and His-235.

Belongs to the isocitrate lyase/PEP mutase superfamily. Oxaloacetate decarboxylase family. Homotetramer; dimer of dimers. It depends on Mg(2+) as a cofactor.

The enzyme catalyses oxaloacetate + H(+) = pyruvate + CO2. Functionally, catalyzes the decarboxylation of oxaloacetate into pyruvate. Seems to play a role in maintaining cellular concentrations of bicarbonate and pyruvate. The protein is Oxaloacetate decarboxylase of Pseudomonas putida (strain ATCC 47054 / DSM 6125 / CFBP 8728 / NCIMB 11950 / KT2440).